Consider the following 128-residue polypeptide: Small ribosomal subunit protein uS8 (128 aa).

Belongs to the universal ribosomal protein uS8 family. Part of the 30S ribosomal subunit. Contacts proteins S5 and S12.

Functionally, one of the primary rRNA binding proteins, it binds directly to 16S rRNA central domain where it helps coordinate assembly of the platform of the 30S subunit. The polypeptide is Small ribosomal subunit protein uS8 (Methylacidiphilum infernorum (isolate V4) (Methylokorus infernorum (strain V4))).